The sequence spans 555 residues: Dihydroxy-acid dehydratase (555 aa).

D78 contacts Mg(2+). C119 contributes to the [2Fe-2S] cluster binding site. Mg(2+) is bound by residues D120 and K121. Position 121 is an N6-carboxylysine (K121). Residue C191 coordinates [2Fe-2S] cluster. E444 contributes to the Mg(2+) binding site. Catalysis depends on S470, which acts as the Proton acceptor.

This sequence belongs to the IlvD/Edd family. Homodimer. [2Fe-2S] cluster serves as cofactor. It depends on Mg(2+) as a cofactor.

The catalysed reaction is (2R)-2,3-dihydroxy-3-methylbutanoate = 3-methyl-2-oxobutanoate + H2O. It carries out the reaction (2R,3R)-2,3-dihydroxy-3-methylpentanoate = (S)-3-methyl-2-oxopentanoate + H2O. Its pathway is amino-acid biosynthesis; L-isoleucine biosynthesis; L-isoleucine from 2-oxobutanoate: step 3/4. It participates in amino-acid biosynthesis; L-valine biosynthesis; L-valine from pyruvate: step 3/4. In terms of biological role, functions in the biosynthesis of branched-chain amino acids. Catalyzes the dehydration of (2R,3R)-2,3-dihydroxy-3-methylpentanoate (2,3-dihydroxy-3-methylvalerate) into 2-oxo-3-methylpentanoate (2-oxo-3-methylvalerate) and of (2R)-2,3-dihydroxy-3-methylbutanoate (2,3-dihydroxyisovalerate) into 2-oxo-3-methylbutanoate (2-oxoisovalerate), the penultimate precursor to L-isoleucine and L-valine, respectively. This chain is Dihydroxy-acid dehydratase, found in Oleidesulfovibrio alaskensis (strain ATCC BAA-1058 / DSM 17464 / G20) (Desulfovibrio alaskensis).